The following is a 491-amino-acid chain: Cytochrome P450 2F5 (491 aa).

Cysteine 436 is a binding site for heme.

This sequence belongs to the cytochrome P450 family. It depends on heme as a cofactor.

It localises to the endoplasmic reticulum membrane. The protein resides in the microsome membrane. The catalysed reaction is an organic molecule + reduced [NADPH--hemoprotein reductase] + O2 = an alcohol + oxidized [NADPH--hemoprotein reductase] + H2O + H(+). In terms of biological role, cytochromes P450 are a group of heme-thiolate monooxygenases. In liver microsomes, this enzyme is involved in an NADPH-dependent electron transport pathway. It oxidizes a variety of structurally unrelated compounds, including steroids, fatty acids, and xenobiotics. In Gorilla gorilla gorilla (Western lowland gorilla), this protein is Cytochrome P450 2F5 (CYP2F5).